The chain runs to 320 residues: Nicotianamine synthase 1 (320 aa).

The protein belongs to the nicotianamine synthase (NAS)-like family. In terms of tissue distribution, in shoots and roots.

The enzyme catalyses 3 S-adenosyl-L-methionine = nicotianamine + 3 S-methyl-5'-thioadenosine + 3 H(+). Functionally, synthesizes nicotianamine, a polyamine which serves as a sensor for the physiological iron status within the plant, and/or might be involved in the transport of iron. The protein is Nicotianamine synthase 1 (NAS1) of Arabidopsis thaliana (Mouse-ear cress).